Consider the following 287-residue polypeptide: Shikimate kinase 3, chloroplastic (287 aa).

A chloroplast-targeting transit peptide spans 1–57 (MDAGVGLRAKPGAWAGLGNPRRSSTARVPVRFAVEKFAQPLVLGSDRRSCGAKLKVS). Residue 98–105 (GMMGSGKT) coordinates ATP. A Mg(2+)-binding site is contributed by threonine 105. 3 residues coordinate substrate: aspartate 123, arginine 148, and glycine 170. Residue arginine 209 participates in ATP binding.

This sequence belongs to the shikimate kinase family. Requires Mg(2+) as cofactor. Expressed in panicles.

Its subcellular location is the plastid. The protein localises to the chloroplast. It catalyses the reaction shikimate + ATP = 3-phosphoshikimate + ADP + H(+). The protein operates within metabolic intermediate biosynthesis; chorismate biosynthesis; chorismate from D-erythrose 4-phosphate and phosphoenolpyruvate: step 5/7. Functionally, catalyzes the specific phosphorylation of the 3-hydroxyl group of shikimic acid using ATP as a cosubstrate. This chain is Shikimate kinase 3, chloroplastic (SK3), found in Oryza sativa subsp. japonica (Rice).